The following is a 330-amino-acid chain: Pseudouridine-5'-phosphate glycosidase (330 aa).

Glutamate 50 (proton donor) is an active-site residue. Residues lysine 112 and valine 132 each contribute to the substrate site. Position 164 (aspartate 164) interacts with Mn(2+). 166 to 168 (SSD) provides a ligand contact to substrate. Lysine 185 acts as the Nucleophile in catalysis.

Belongs to the pseudouridine-5'-phosphate glycosidase family. In terms of assembly, homotrimer. It depends on Mn(2+) as a cofactor.

The protein localises to the peroxisome. It carries out the reaction D-ribose 5-phosphate + uracil = psi-UMP + H2O. In terms of biological role, catalyzes the reversible cleavage of pseudouridine 5'-phosphate (PsiMP) to ribose 5-phosphate and uracil. Functions biologically in the cleavage direction, as part of a pseudouridine degradation pathway. Acts together with the pseudouridine kinase PUKI in the peroxisome to prevent toxic pseudouridine monophosphate accumulation. Can catalyze the formation of pseudouridine 5'-phosphate (reverse reaction) in vitro, with a catalytic efficiency 4 times lower than the hydrolysis reaction. This Arabidopsis thaliana (Mouse-ear cress) protein is Pseudouridine-5'-phosphate glycosidase.